A 278-amino-acid chain; its full sequence is uncharacterized protein (278 aa).

This sequence belongs to the manganese catalase family.

This is an uncharacterized protein from Bacillus subtilis (strain 168).